A 442-amino-acid polypeptide reads, in one-letter code: 3-isopropylmalate dehydratase large subunit (442 aa).

3 residues coordinate [4Fe-4S] cluster: Cys347, Cys407, and Cys410.

It belongs to the aconitase/IPM isomerase family. LeuC type 1 subfamily. As to quaternary structure, heterodimer of LeuC and LeuD. It depends on [4Fe-4S] cluster as a cofactor.

The enzyme catalyses (2R,3S)-3-isopropylmalate = (2S)-2-isopropylmalate. Its pathway is amino-acid biosynthesis; L-leucine biosynthesis; L-leucine from 3-methyl-2-oxobutanoate: step 2/4. In terms of biological role, catalyzes the isomerization between 2-isopropylmalate and 3-isopropylmalate, via the formation of 2-isopropylmaleate. This Buchnera aphidicola subsp. Uroleucon helianthicola protein is 3-isopropylmalate dehydratase large subunit.